The following is a 316-amino-acid chain: Acetaldehyde dehydrogenase (316 aa).

11–14 (SGNI) provides a ligand contact to NAD(+). The active-site Acyl-thioester intermediate is the Cys131. Residues 162 to 170 (SAGPGTRAN) and Asn289 each bind NAD(+).

Belongs to the acetaldehyde dehydrogenase family. In terms of assembly, interacts with MhpE.

It catalyses the reaction acetaldehyde + NAD(+) + CoA = acetyl-CoA + NADH + H(+). It participates in aromatic compound metabolism; 3-phenylpropanoate degradation. Its function is as follows. Catalyzes the conversion of acetaldehyde to acetyl-CoA, using NAD(+) and coenzyme A. Is the final enzyme in the meta-cleavage pathway for the degradation of aromatic compounds. This chain is Acetaldehyde dehydrogenase, found in Klebsiella pneumoniae (strain 342).